The following is a 299-amino-acid chain: MATH domain and coiled-coil domain-containing protein At2g42460 (299 aa).

One can recognise an MATH domain in the interval 7–130 (QKTFTWKIEN…NNTLFIEVYI (124 aa)). A coiled-coil region spans residues 225 to 262 (FRVKWLKSKLDEISLARKKKVDADAARVQELEGKVKNQ).

The protein is MATH domain and coiled-coil domain-containing protein At2g42460 of Arabidopsis thaliana (Mouse-ear cress).